Reading from the N-terminus, the 357-residue chain is DNA integrity scanning protein DisA (357 aa).

Residues Arg-3–Ser-141 enclose the DAC domain. Residues Gly-70, Leu-88, and Thr-101–Ser-105 contribute to the ATP site.

This sequence belongs to the DisA family. Homooctamer. Mg(2+) serves as cofactor.

The catalysed reaction is 2 ATP = 3',3'-c-di-AMP + 2 diphosphate. Its function is as follows. Participates in a DNA-damage check-point. DisA forms globular foci that rapidly scan along the chromosomes searching for lesions. In terms of biological role, also has diadenylate cyclase activity, catalyzing the condensation of 2 ATP molecules into cyclic di-AMP (c-di-AMP). c-di-AMP likely acts as a signaling molecule that may couple DNA integrity with a cellular process. The protein is DNA integrity scanning protein DisA of Mycolicibacterium paratuberculosis (strain ATCC BAA-968 / K-10) (Mycobacterium paratuberculosis).